The following is a 349-amino-acid chain: Cyclic amide hydrolase (349 aa).

Residues 1–90 form an RU A region; that stretch reads MTSPEDTAGV…AVFVDDPASS (90 aa). Position 38 (Arg38) interacts with substrate. Residues 99–231 form an RU B region; sequence GLSIGVTTTA…AAVLVMGNSP (133 aa). Lys149 is a catalytic residue. Substrate is bound by residues Arg176, 214-215, Lys311, and 330-331; these read SA and SG. Ser214 acts as the Nucleophile in catalysis. Residues 237–349 form an RU C region; sequence YRIGHGVLRD…GGGTVAVIAR (113 aa).

The protein belongs to the cyclic amide hydrolase (CyAH) family. Homotetramer.

Cyclic amide hydrolase of unknown substrate specificity. Catalyzes the hydrolytic ring-opening of a cyclic amide. Does not act on cyanuric acid nor barbituric acid. The protein is Cyclic amide hydrolase of Rhodococcus sp.